The sequence spans 302 residues: tRNA dimethylallyltransferase (302 aa).

Residue 10-17 coordinates ATP; sequence GPTAIGKT. Residue 12–17 participates in substrate binding; the sequence is TAIGKT. The interval 35–38 is interaction with substrate tRNA; sequence DSRQ.

The protein belongs to the IPP transferase family. In terms of assembly, monomer. It depends on Mg(2+) as a cofactor.

The catalysed reaction is adenosine(37) in tRNA + dimethylallyl diphosphate = N(6)-dimethylallyladenosine(37) in tRNA + diphosphate. Its function is as follows. Catalyzes the transfer of a dimethylallyl group onto the adenine at position 37 in tRNAs that read codons beginning with uridine, leading to the formation of N6-(dimethylallyl)adenosine (i(6)A). The sequence is that of tRNA dimethylallyltransferase from Christiangramia forsetii (strain DSM 17595 / CGMCC 1.15422 / KT0803) (Gramella forsetii).